The following is a 194-amino-acid chain: Peptidyl-tRNA hydrolase (194 aa).

Residue tyrosine 17 participates in tRNA binding. Histidine 22 serves as the catalytic Proton acceptor. Residues phenylalanine 68, asparagine 70, and asparagine 116 each coordinate tRNA.

Belongs to the PTH family. In terms of assembly, monomer.

It localises to the cytoplasm. The catalysed reaction is an N-acyl-L-alpha-aminoacyl-tRNA + H2O = an N-acyl-L-amino acid + a tRNA + H(+). Its function is as follows. Hydrolyzes ribosome-free peptidyl-tRNAs (with 1 or more amino acids incorporated), which drop off the ribosome during protein synthesis, or as a result of ribosome stalling. Catalyzes the release of premature peptidyl moieties from peptidyl-tRNA molecules trapped in stalled 50S ribosomal subunits, and thus maintains levels of free tRNAs and 50S ribosomes. This is Peptidyl-tRNA hydrolase from Proteus mirabilis (strain HI4320).